Reading from the N-terminus, the 614-residue chain is Probable ATP-dependent RNA helicase DDX5 (614 aa).

Residues 1–15 (MSSYSSDRDRGRDRG) show a composition bias toward basic and acidic residues. Residues 1 to 39 (MSSYSSDRDRGRDRGFGAPRFGGSRTGPLSGKKFGNPGE) form a disordered region. Phosphoserine is present on S24. N6-acetyllysine; alternate is present on K32. Residue K32 forms a Glycyl lysine isopeptide (Lys-Gly) (interchain with G-Cter in SUMO2); alternate linkage. An N6-acetyllysine mark is found at K33 and K40. K45 participates in a covalent cross-link: Glycyl lysine isopeptide (Lys-Gly) (interchain with G-Cter in SUMO2). K53 is covalently cross-linked (Glycyl lysine isopeptide (Lys-Gly) (interchain with G-Cter in SUMO2); alternate). K53 is covalently cross-linked (Glycyl lysine isopeptide (Lys-Gly) (interchain with G-Cter in SUMO); alternate). K53 is covalently cross-linked (Glycyl lysine isopeptide (Lys-Gly) (interchain with G-Cter in SUMO1); alternate). A Q motif motif is present at residues 94 to 122 (LNFYEANFPANVMDVIARQNFTEPTAIQA). Residues 114–116 (FTE), Q121, and 138–145 (AQTGSGKT) each bind ATP. The region spanning 125–300 (WPVALSGLDM…EDFLKDYIHI (176 aa)) is the Helicase ATP-binding domain. Position 236 is an N6-acetyllysine (K236). The short motif at 248–251 (DEAD) is the DEAD box element. Y297 carries the post-translational modification Phosphotyrosine. The region spanning 328–475 (KLIRLMEEIM…AINPKLLQLV (148 aa)) is the Helicase C-terminal domain. Residues K340, K343, K388, K391, K411, K437, K451, and K470 each participate in a glycyl lysine isopeptide (Lys-Gly) (interchain with G-Cter in SUMO2) cross-link. Residues 477–504 (DRGSGRSRGRGGMKDDRRDRYSAGKRGG) form a disordered region. The tract at residues 477 to 614 (DRGSGRSRGR…GYPMPTGYSQ (138 aa)) is transactivation domain. Residue S480 is modified to Phosphoserine. Over residues 488 to 498 (GMKDDRRDRYS) the composition is skewed to basic and acidic residues. K523 is covalently cross-linked (Glycyl lysine isopeptide (Lys-Gly) (interchain with G-Cter in SUMO2)).

It belongs to the DEAD box helicase family. DDX5/DBP2 subfamily. Identified in the spliceosome C complex. Component of a ribonucleoprotein complex containing mRNAs and RNA-binding proteins including DDX5, HNRNPH2 and SRSF1 as well as splicing regulator ARVCF. Interacts with RBM4; the interaction occurs in an RNA-independent manner. Interacts with AGO1 and AGO2. Interacts with ESR1, AR, EP300, CREBBP, POLR2A, TP53, RUNX2 and HDAC1. Self-associates. Interacts with DDX17. Interacts with BRDT. The large PER complex involved in the repression of transcriptional termination is composed of at least PER2, CDK9, DDX5, DHX9, NCBP1 and POLR2A (active). Interacts with DHX36; this interaction occurs in a RNA-dependent manner. Interacts with NUPR1. Interacts with ERCC6. Interacts with DDX3X in the cytoplasm; this interaction may be more efficient when both proteins are unphosphorylated. Sumoylated; sumoylation, promoted by PIAS1, promotes interaction with HDAC1 and transcriptional repression activity. Sumoylation also significantly increases stability, and reduces polyubiquitination. Post-translationally, polyubiquitinated, leading to proteasomal degradation. In terms of processing, weakly phosphorylated in the G1/S phase of the cell cycle and much more at G2/M, especially at Thr and Tyr residues.

The protein localises to the nucleus. The protein resides in the nucleolus. It localises to the cytoplasm. It carries out the reaction ATP + H2O = ADP + phosphate + H(+). Functionally, involved in the alternative regulation of pre-mRNA splicing; its RNA helicase activity is necessary for increasing tau exon 10 inclusion and occurs in a RBM4-dependent manner. Binds to the tau pre-mRNA in the stem-loop region downstream of exon 10. The rate of ATP hydrolysis is highly stimulated by single-stranded RNA. Involved in transcriptional regulation; the function is independent of the RNA helicase activity. Transcriptional coactivator for androgen receptor AR but probably not ESR1. Synergizes with DDX17 and SRA1 RNA to activate MYOD1 transcriptional activity and involved in skeletal muscle differentiation. Transcriptional coactivator for p53/TP53 and involved in p53/TP53 transcriptional response to DNA damage and p53/TP53-dependent apoptosis. Transcriptional coactivator for RUNX2 and involved in regulation of osteoblast differentiation. Acts as a transcriptional repressor in a promoter-specific manner; the function probably involves association with histone deacetylases, such as HDAC1. As component of a large PER complex is involved in the inhibition of 3' transcriptional termination of circadian target genes such as PER1 and NR1D1 and the control of the circadian rhythms. This is Probable ATP-dependent RNA helicase DDX5 (Ddx5) from Mus musculus (Mouse).